Consider the following 340-residue polypeptide: Tetraacyldisaccharide 4'-kinase (340 aa).

47-54 (SVGGTGKT) contributes to the ATP binding site.

Belongs to the LpxK family.

It catalyses the reaction a lipid A disaccharide + ATP = a lipid IVA + ADP + H(+). It functions in the pathway glycolipid biosynthesis; lipid IV(A) biosynthesis; lipid IV(A) from (3R)-3-hydroxytetradecanoyl-[acyl-carrier-protein] and UDP-N-acetyl-alpha-D-glucosamine: step 6/6. In terms of biological role, transfers the gamma-phosphate of ATP to the 4'-position of a tetraacyldisaccharide 1-phosphate intermediate (termed DS-1-P) to form tetraacyldisaccharide 1,4'-bis-phosphate (lipid IVA). The chain is Tetraacyldisaccharide 4'-kinase from Flavobacterium johnsoniae (strain ATCC 17061 / DSM 2064 / JCM 8514 / BCRC 14874 / CCUG 350202 / NBRC 14942 / NCIMB 11054 / UW101) (Cytophaga johnsonae).